The chain runs to 381 residues: Galactose-1-phosphate uridylyltransferase (381 aa).

Residues C65 and C68 each contribute to the Zn(2+) site. 90 to 91 (ND) serves as a coordination point for UDP-alpha-D-glucose. H131 serves as a coordination point for Zn(2+). N175 contributes to the UDP-alpha-D-glucose binding site. Residue H186 coordinates Zn(2+). Residue H188 is the Tele-UMP-histidine intermediate of the active site. Q190 provides a ligand contact to UDP-alpha-D-glucose. Fe cation is bound by residues E204, H306, H323, and H325. UDP-alpha-D-glucose is bound by residues 338–341 (KFMV) and 343–344 (FE).

This sequence belongs to the galactose-1-phosphate uridylyltransferase type 1 family. As to quaternary structure, homodimer. Requires Zn(2+) as cofactor.

It catalyses the reaction alpha-D-galactose 1-phosphate + UDP-alpha-D-glucose = alpha-D-glucose 1-phosphate + UDP-alpha-D-galactose. It participates in carbohydrate metabolism; galactose metabolism. In Cryptococcus neoformans var. neoformans serotype D (strain B-3501A) (Filobasidiella neoformans), this protein is Galactose-1-phosphate uridylyltransferase (GAL7).